Here is a 306-residue protein sequence, read N- to C-terminus: 17-beta-hydroxysteroid dehydrogenase type 3 (306 aa).

44 to 73 contacts NADP(+); that stretch reads GQWAVITGAGDGIGKAYSFELARHGLNVVL. Position 181 (serine 181) interacts with substrate. The active-site Proton acceptor is tyrosine 194.

It belongs to the short-chain dehydrogenases/reductases (SDR) family. 17-beta-HSD 3 subfamily.

The protein resides in the endoplasmic reticulum. It carries out the reaction a 17beta-hydroxy steroid + NADP(+) = a 17-oxo steroid + NADPH + H(+). It catalyses the reaction testosterone + NADP(+) = androst-4-ene-3,17-dione + NADPH + H(+). The enzyme catalyses 17beta-estradiol + NADP(+) = estrone + NADPH + H(+). The catalysed reaction is 3beta-hydroxyandrost-5-en-17-one + NADPH + H(+) = androst-5-en-3beta,17beta-diol + NADP(+). It carries out the reaction 17beta-hydroxy-5alpha-androstan-3-one + NADP(+) = 5alpha-androstan-3,17-dione + NADPH + H(+). It catalyses the reaction androsterone + NADPH + H(+) = 5alpha-androstane-3alpha,17beta-diol + NADP(+). The enzyme catalyses 3beta-hydroxy-5alpha-androstan-17-one + NADPH + H(+) = 5alpha-androstane-3beta,17beta-diol + NADP(+). The catalysed reaction is androst-4-ene-3,11,17-trione + NADPH + H(+) = 17beta-hydroxyandrost-4-ene-3,11-dione + NADP(+). It carries out the reaction 11beta-hydroxyandrost-4-ene-3,17-dione + NADPH + H(+) = 11beta,17beta-dihydroxyandrost-4-ene-3-one + NADP(+). Its pathway is hormone biosynthesis; testosterone biosynthesis. The protein operates within steroid metabolism. Functionally, catalyzes the conversion of 17-oxosteroids to 17beta-hydroxysteroids. Favors the reduction of androstenedione to testosterone. Testosterone is the key androgen driving male development and function. Uses NADPH while the two other EDH17B enzymes use NADH. Androgens such as epiandrosterone, dehydroepiandrosterone, androsterone and androstanedione are accepted as substrates and reduced at C-17. Can reduce 11-ketoandrostenedione as well as 11beta-hydroxyandrostenedione at C-17 to the respective testosterone forms. Plays a role in the rate-limiting-step for the maximum level of testosterone production by the testis but does not affect basal testosterone production. This is 17-beta-hydroxysteroid dehydrogenase type 3 from Rattus norvegicus (Rat).